We begin with the raw amino-acid sequence, 116 residues long: Large ribosomal subunit protein bL19 (116 aa).

It belongs to the bacterial ribosomal protein bL19 family.

Functionally, this protein is located at the 30S-50S ribosomal subunit interface and may play a role in the structure and function of the aminoacyl-tRNA binding site. This chain is Large ribosomal subunit protein bL19, found in Histophilus somni (strain 129Pt) (Haemophilus somnus).